Consider the following 2226-residue polypeptide: DNA polymerase epsilon catalytic subunit A (2226 aa).

The interval 1240 to 1265 (RVSKVTSRKRRNGKANNVSDSEEEER) is disordered. Residues Cys-2112, Cys-2115, Cys-2134, and Cys-2137 each contribute to the Zn(2+) site. A CysA-type zinc finger spans residues 2112–2137 (CDYCNYIRDIDFCRDEQKNIWNCSNC). The [4Fe-4S] cluster site is built by Cys-2168, Cys-2171, Cys-2183, and Cys-2185. Residues 2168-2185 (CSKCHQIKSDNMSEYCKC) carry the CysB motif motif.

The protein belongs to the DNA polymerase type-B family. In terms of assembly, heterotetramer. Consists of 4 subunits: POL2, DPB2, DPB3 and DPB4. It depends on [4Fe-4S] cluster as a cofactor.

The protein resides in the nucleus. It carries out the reaction DNA(n) + a 2'-deoxyribonucleoside 5'-triphosphate = DNA(n+1) + diphosphate. Functionally, DNA polymerase II participates in chromosomal DNA replication. In Debaryomyces hansenii (strain ATCC 36239 / CBS 767 / BCRC 21394 / JCM 1990 / NBRC 0083 / IGC 2968) (Yeast), this protein is DNA polymerase epsilon catalytic subunit A (POL2).